We begin with the raw amino-acid sequence, 76 residues long: uncharacterized protein (76 aa).

The protein belongs to the IIV-6 342R family.

This is an uncharacterized protein from Invertebrate iridescent virus 3 (IIV-3).